A 58-amino-acid polypeptide reads, in one-letter code: MERKKLVCPLCGGTKFRVEEGKIDSKWGFTAHKVKIVICENCGYVMLFYEGRTIWDFD.

It to A.fulgidus AF2407.1.

This is an uncharacterized protein from Pyrococcus abyssi (strain GE5 / Orsay).